Consider the following 408-residue polypeptide: MLSRLARTQISRSALLSQTRQLSFDLNETQKEIQAAALKFSKEVLVPNAAKFDESGEFPWEIIRQAHSLGLMNPQIPEKYGGPGMTTLETTLIVEALSYGCTGLQLGIMGPSLAIAPVYIAGNEEQKKKYLGALAAEPIIASYCVTEPGAGSDVNGVKTKCEKKGNEYIINGSKAWITGGGHAKWFFVLARSDPNPKTPAGKAFTAFIVDGDTSGITRGKKEKNMGQRCSDTRTITFEDVRVPEENVLGPPGAGFKVAMSAFDMTRPGVAAGALGLSWRCLDESAKYALQRKAFGTEIANHQAVQFMLSDMAINLELARLITYKSATDVDNGVRSSYNASKSASQRIPRIRRLLMLFRCNGFNSEYPVEKLMRDAKIYQIYEGTSQIQRIVISRMLLGHVAQNGTSRM.

The N-terminal 5 residues, 1-5 (MLSRL), are a transit peptide targeting the mitochondrion. FAD contacts are provided by residues 143–152 (YCVTEPGAGS) and 176–178 (WIT). Serine 152 is a binding site for substrate. Residue 263 to 266 (DMTR) coordinates substrate. Residues 291 to 293 (RKA), 301 to 302 (HQ), and 355 to 359 (MLFRC) contribute to the FAD site. Glutamate 382 serves as the catalytic Proton acceptor. A substrate-binding site is contributed by glycine 383. 384 to 386 (TSQ) provides a ligand contact to FAD. A substrate-binding site is contributed by arginine 394.

It belongs to the acyl-CoA dehydrogenase family. Homotetramer. FAD serves as cofactor.

Its subcellular location is the mitochondrion matrix. It catalyses the reaction a medium-chain 2,3-saturated fatty acyl-CoA + oxidized [electron-transfer flavoprotein] + H(+) = a medium-chain (2E)-enoyl-CoA + reduced [electron-transfer flavoprotein]. It functions in the pathway lipid metabolism; mitochondrial fatty acid beta-oxidation. This enzyme is specific for acyl chain lengths of 4 to 16. This Caenorhabditis briggsae protein is Probable medium-chain specific acyl-CoA dehydrogenase 2, mitochondrial.